Consider the following 124-residue polypeptide: UPF0102 protein Haur_0145 (124 aa).

It belongs to the UPF0102 family.

This chain is UPF0102 protein Haur_0145, found in Herpetosiphon aurantiacus (strain ATCC 23779 / DSM 785 / 114-95).